The following is a 706-amino-acid chain: G2/M phase-specific E3 ubiquitin-protein ligase (706 aa).

Residues Asn-11 to Ile-51 form a C2HC pre-PHD-type zinc finger. The segment at Leu-79–Arg-128 adopts a PHD-type 1 zinc-finger fold. A PHD-type 2; degenerate zinc finger spans residues Pro-143–Asn-193. The PHD-type 3 zinc-finger motif lies at Arg-237 to Arg-286. Positions Ile-371–Glu-698 constitute an HECT domain.

Predominantly expressed in brain, liver, kidney, testes and ovary.

The protein localises to the nucleus. The protein resides in the nucleolus. It is found in the cytoplasm. The catalysed reaction is S-ubiquitinyl-[E2 ubiquitin-conjugating enzyme]-L-cysteine + [acceptor protein]-L-lysine = [E2 ubiquitin-conjugating enzyme]-L-cysteine + N(6)-ubiquitinyl-[acceptor protein]-L-lysine.. It participates in protein modification; protein ubiquitination. Functionally, E3 ubiquitin-protein ligase which accepts ubiquitin from an E2 ubiquitin-conjugating enzyme in the form of a thioester and then directly transfers the ubiquitin to targeted substrates. Essential in early embryonic development to prevent apoptotic death. The sequence is that of G2/M phase-specific E3 ubiquitin-protein ligase (G2E3) from Homo sapiens (Human).